The following is a 571-amino-acid chain: Double-stranded RNA-binding protein Staufen homolog 2 (571 aa).

Residues 8 to 75 form the DRBM 1 domain; it reads TPMCLVNELA…ANKALTESTL (68 aa). Phosphoserine occurs at positions 9 and 13. Residue R18 is modified to Phosphothreonine. S21 is subject to Phosphoserine. Disordered stretches follow at residues 71–94 and 178–203; these read TEST…PGSI and ALQN…DDKD. Polar residues predominate over residues 83–94; the sequence is PKSNVNNNPGSI. Positions 95 to 181 constitute a DRBM 2 domain; sequence TPTVELNGLA…AMKALQALQN (87 aa). Phosphoserine is present on S188. Residues 194 to 203 are compositionally biased toward basic and acidic residues; that stretch reads SGKEMDDDKD. DRBM domains are found at residues 207–274 and 307–375; these read SEIS…ELKK and NPIS…QLGY. Short sequence motifs (nuclear localization signal) lie at residues 273 to 317 and 373 to 412; these read KKLP…QIQQ and LGYK…PKGI. The tract at residues 381–571 is required for dendritic transport; that stretch reads LQDQLDKTGE…QDCKKSKSVI (191 aa). The interval 382 to 413 is disordered; it reads QDQLDKTGENKGWSGPKPGFPEPANNTPKGIL. S395, S416, S426, S440, S456, and S493 each carry phosphoserine. The tract at residues 546 to 571 is disordered; that stretch reads LREKADNNQANPGSITQDCKKSKSVI. The span at 552–562 shows a compositional bias: polar residues; that stretch reads NNQANPGSITQ.

In terms of assembly, identified in a mRNP complex, at least composed of DHX9, DDX3X, ELAVL1, HNRNPU, IGF2BP1, ILF3, PABPC1, PCBP2, PTBP2, STAU1, STAU2, SYNCRIP and YBX1. Interacts with the exportin XPO5. This requires RNA and RAN bound to GTP. Interacts with microtubules. Isoform 2 and isoform 3 may also interact with ribosomes, and this association is independent of translation. Interacts with TRIM71 (via NHL repeats) in an RNA-dependent manner. As to expression, expressed in both somata and dendrites of hippocampal neurons.

Its subcellular location is the nucleus. The protein resides in the nucleolus. It is found in the cytoplasm. It localises to the endoplasmic reticulum. RNA-binding protein required for the microtubule-dependent transport of neuronal RNA from the cell body to the dendrite. As protein synthesis occurs within the dendrite, the localization of specific mRNAs to dendrites may be a prerequisite for neurite outgrowth and plasticity at sites distant from the cell body. The polypeptide is Double-stranded RNA-binding protein Staufen homolog 2 (Stau2) (Rattus norvegicus (Rat)).